The following is a 44-amino-acid chain: CHHEGLPCTSGDGCCGMECCGGVCSSHCGNGRRRQVPLKSFGQR.

Cystine bridges form between Cys1–Cys15, Cys8–Cys20, Cys14–Cys24, and Cys19–Cys28. Residue Asn30 is modified to Asparagine amide. Residues 35–44 constitute a propeptide that is removed on maturation; it reads QVPLKSFGQR.

The protein belongs to the conotoxin I2 superfamily. In terms of tissue distribution, expressed by the venom duct.

The protein resides in the secreted. This chain is Conotoxin Fi11.11, found in Conus figulinus (Fig cone).